The primary structure comprises 485 residues: Ribulose bisphosphate carboxylase large chain 2 (485 aa).

N125 and T175 together coordinate substrate. The active-site Proton acceptor is K177. K179 provides a ligand contact to substrate. Mg(2+) contacts are provided by K203, D205, and E206. K203 carries the N6-carboxylysine modification. H295 serves as the catalytic Proton acceptor. Residues R296, H328, and S380 each contribute to the substrate site.

It belongs to the RuBisCO large chain family. Type I subfamily. As to quaternary structure, heterohexadecamer of 8 large chains and 8 small chains. The cofactor is Mg(2+).

The enzyme catalyses 2 (2R)-3-phosphoglycerate + 2 H(+) = D-ribulose 1,5-bisphosphate + CO2 + H2O. The catalysed reaction is D-ribulose 1,5-bisphosphate + O2 = 2-phosphoglycolate + (2R)-3-phosphoglycerate + 2 H(+). Functionally, ruBisCO catalyzes two reactions: the carboxylation of D-ribulose 1,5-bisphosphate, the primary event in carbon dioxide fixation, as well as the oxidative fragmentation of the pentose substrate. Both reactions occur simultaneously and in competition at the same active site. In Methylibium petroleiphilum (strain ATCC BAA-1232 / LMG 22953 / PM1), this protein is Ribulose bisphosphate carboxylase large chain 2.